The sequence spans 530 residues: Bifunctional purine biosynthesis protein PurH (530 aa).

Positions 1–148 (MNNPRPIRRA…KNHKDVTIVV (148 aa)) constitute an MGS-like domain.

It belongs to the PurH family.

The enzyme catalyses (6R)-10-formyltetrahydrofolate + 5-amino-1-(5-phospho-beta-D-ribosyl)imidazole-4-carboxamide = 5-formamido-1-(5-phospho-D-ribosyl)imidazole-4-carboxamide + (6S)-5,6,7,8-tetrahydrofolate. It catalyses the reaction IMP + H2O = 5-formamido-1-(5-phospho-D-ribosyl)imidazole-4-carboxamide. It functions in the pathway purine metabolism; IMP biosynthesis via de novo pathway; 5-formamido-1-(5-phospho-D-ribosyl)imidazole-4-carboxamide from 5-amino-1-(5-phospho-D-ribosyl)imidazole-4-carboxamide (10-formyl THF route): step 1/1. The protein operates within purine metabolism; IMP biosynthesis via de novo pathway; IMP from 5-formamido-1-(5-phospho-D-ribosyl)imidazole-4-carboxamide: step 1/1. The sequence is that of Bifunctional purine biosynthesis protein PurH from Aliivibrio salmonicida (strain LFI1238) (Vibrio salmonicida (strain LFI1238)).